Consider the following 206-residue polypeptide: Putative cryptic phosphonate transport system permease protein PhnE1 (206 aa).

3 helical membrane-spanning segments follow: residues 30-50, 92-112, and 137-157; these read WFSLLSWAVVLAVLVVSWQGA, IAVWGTALAVVLSIPFGLMSA, and MVFAMLFVVAVGLGPFAGVLA.

If the reading frame is restored, the complex is composed of two ATP-binding proteins (PhnC), two transmembrane proteins (PhnE) and a solute-binding protein (PhnD).

The protein resides in the cell inner membrane. Its function is as follows. N-terminal fragment of the PhnE protein, part of a phosphonate usage operon that is cryptic in K12 strains. Growth of K12 strains on phosphonate can be observed when it is used as the sole phosphorus source after a 60 hour lag period, suggesting the operon is activated. An intact PhnE in strain B is (AC A0A140NFA3). Part of the binding-protein-dependent transport system for phosphonates; probably responsible for the translocation of the substrate across the membrane. The chain is Putative cryptic phosphonate transport system permease protein PhnE1 (phnE1) from Escherichia coli (strain K12).